The chain runs to 151 residues: Putative phosphatidylglycerol/phosphatidylinositol transfer protein 3 (151 aa).

An N-terminal signal peptide occupies residues 1–26; the sequence is MKYSQNQIVYVIFFFIILIVVKPIES.

It belongs to the NPC2 family. Monomer.

Its function is as follows. Catalyzes the intermembrane transfer of phosphatidylglycerol and phosphatidylinositol. In Dictyostelium discoideum (Social amoeba), this protein is Putative phosphatidylglycerol/phosphatidylinositol transfer protein 3.